Consider the following 439-residue polypeptide: Xylose isomerase (439 aa).

Residues H101 and D104 contribute to the active site. Mg(2+) is bound by residues E232, E268, H271, D296, D307, D309, and D339.

Belongs to the xylose isomerase family. Homotetramer. Mg(2+) serves as cofactor.

The protein resides in the cytoplasm. It catalyses the reaction alpha-D-xylose = alpha-D-xylulofuranose. In Pectobacterium atrosepticum (strain SCRI 1043 / ATCC BAA-672) (Erwinia carotovora subsp. atroseptica), this protein is Xylose isomerase.